The chain runs to 254 residues: 3-beta-hydroxysteroid dehydrogenase (254 aa).

NAD(+) is bound by residues 12–40 (VTGGASGVGLEVVKLLLGEGAKVAFSDIN) and D61. S139 is a binding site for substrate. Y152 serves as the catalytic Proton acceptor. K156 lines the NAD(+) pocket.

Belongs to the short-chain dehydrogenases/reductases (SDR) family. In terms of assembly, homotetramer.

It carries out the reaction testosterone + NAD(+) = androst-4-ene-3,17-dione + NADH + H(+). The catalysed reaction is testosterone + NADP(+) = androst-4-ene-3,17-dione + NADPH + H(+). The protein is 3-beta-hydroxysteroid dehydrogenase of Comamonas testosteroni (Pseudomonas testosteroni).